Here is a 503-residue protein sequence, read N- to C-terminus: Guanosine-5'-triphosphate,3'-diphosphate pyrophosphatase (503 aa).

This sequence belongs to the GppA/Ppx family. GppA subfamily.

It carries out the reaction guanosine 3'-diphosphate 5'-triphosphate + H2O = guanosine 3',5'-bis(diphosphate) + phosphate + H(+). Its pathway is purine metabolism; ppGpp biosynthesis; ppGpp from GTP: step 2/2. In terms of biological role, catalyzes the conversion of pppGpp to ppGpp. Guanosine pentaphosphate (pppGpp) is a cytoplasmic signaling molecule which together with ppGpp controls the 'stringent response', an adaptive process that allows bacteria to respond to amino acid starvation, resulting in the coordinated regulation of numerous cellular activities. This chain is Guanosine-5'-triphosphate,3'-diphosphate pyrophosphatase, found in Pseudoalteromonas atlantica (strain T6c / ATCC BAA-1087).